Reading from the N-terminus, the 332-residue chain is ALTYRGVDWSSVVVEERAGVSYKNTNGNAQPLENILAANGVNTVRQRVWVNPADGNYNLDYNIAIAKRAKAAGLGVYIDFHYSDTWADPAHQTMPAGWPSDIDNLSWKLYNYTLDAANKLQNAGIQPTIVSIGNEIRAGLLWPTGRTENWANIARLLHSAAWGIKDSSLSPKPKIMIHLDNGWDWGTQNWWYTNVLKQGTLELSDFDMMGVSFYPFYSSSATLSALKSSLDNMAKTWNKEIAVVETNWPISCPNPRYSFPSDVKNIPFSPEGQTTFITNVANIVSSVSRGVGLFYWEPAWIHNANLGSSCADNTMFSQSGQALSSLSVFQRI.

Residue asparagine 111 is glycosylated (N-linked (GlcNAc...) asparagine). Residue glutamate 135 is the Proton donor of the active site. Residue glutamate 245 is the Nucleophile of the active site.

It belongs to the glycosyl hydrolase 53 family.

The enzyme catalyses The enzyme specifically hydrolyzes (1-&gt;4)-beta-D-galactosidic linkages in type I arabinogalactans.. This Thermothelomyces thermophilus (Myceliophthora thermophila) protein is Arabinogalactan endo-beta-1,4-galactanase.